The sequence spans 455 residues: MPNIDTATMTPREIVQELDRHIVGQHDAKRAVAIALRNRWRRMQLPEELRNEVMPKNILMIGPTGVGKTEIARRLATLANAPFVKVEATRFTEVGYVGKDVEQIIRDLADTSVKLYREQAKVRVRNQAEERAEDRILDALLPRRSAGIGFDPEAARHEPSAQDNETRIKFRRMLRNGELDEREIELEVAVNASMDIMTPPGMEEMGQQLRQMFSNLGGGKSQKRKLTIKAARPLLIEEEAGKLVNEDDIRTAAIEACEQHGIVFIDEIDKVAKRGEAGSSGGDVSREGVQRDLLPLVEGSNVSTKYGTVKTDHILFIASGAFHLAKPSDLIPELQGRFPIRVELTALTKADFVRILTEPKAALIKQYEALLQTEGVALTFGADAVDRLAEIAAQVNERQENIGARRLHTVLERLLDVLSYEAPDRDGQSVTVDAAYVDAQLGELVQDPDLSRYIL.

Residues V23, 65-70, D266, E333, and R405 contribute to the ATP site; that span reads GVGKTE.

This sequence belongs to the ClpX chaperone family. HslU subfamily. A double ring-shaped homohexamer of HslV is capped on each side by a ring-shaped HslU homohexamer. The assembly of the HslU/HslV complex is dependent on binding of ATP.

The protein localises to the cytoplasm. Its function is as follows. ATPase subunit of a proteasome-like degradation complex; this subunit has chaperone activity. The binding of ATP and its subsequent hydrolysis by HslU are essential for unfolding of protein substrates subsequently hydrolyzed by HslV. HslU recognizes the N-terminal part of its protein substrates and unfolds these before they are guided to HslV for hydrolysis. The chain is ATP-dependent protease ATPase subunit HslU from Xanthomonas campestris pv. campestris (strain 8004).